The sequence spans 59 residues: UPF0434 protein Mmc1_0910 (59 aa).

The protein belongs to the UPF0434 family.

This is UPF0434 protein Mmc1_0910 from Magnetococcus marinus (strain ATCC BAA-1437 / JCM 17883 / MC-1).